The chain runs to 66 residues: Panusin (66 aa).

The N-terminal stretch at methionine 1–glycine 22 is a signal peptide. A propeptide spanning residues glutamate 23–proline 26 is cleaved from the precursor. 3 disulfides stabilise this stretch: cysteine 32/cysteine 54, cysteine 39/cysteine 61, and cysteine 44/cysteine 60. Tyrosine 65 carries the post-translational modification Tyrosine amide.

As to quaternary structure, forms dimers and higher-order oligomers. Post-translationally, contains 3 disulfide bonds.

Its function is as follows. Antimicrobial peptide. Has antibacterial activity against Gram-positive bacteria S.aureus ATCC 29737 and B.subtilis ATCC 6633 as well as against Gram-negative bacteria E.coli ATCC 10536 and K.pneumoniae ATCC 10031. This is Panusin from Panulirus argus (Caribbean spiny lobster).